The sequence spans 455 residues: Bifunctional protein GlmU (455 aa).

The interval 1 to 229 (MYNCAILLAA…FEETMGVNSR (229 aa)) is pyrophosphorylase. UDP-N-acetyl-alpha-D-glucosamine-binding positions include 8–11 (LAAG), lysine 22, glutamine 73, and 78–79 (GT). Residue aspartate 103 participates in Mg(2+) binding. UDP-N-acetyl-alpha-D-glucosamine-binding residues include glycine 140, glutamate 155, asparagine 170, and asparagine 227. Position 227 (asparagine 227) interacts with Mg(2+). The segment at 230–250 (LQLAEVEAIMRKRINAMHLEN) is linker. Positions 251–455 (GVTIIDPNNT…EDWVKKKDEK (205 aa)) are N-acetyltransferase. Arginine 332 and lysine 350 together coordinate UDP-N-acetyl-alpha-D-glucosamine. Residue histidine 362 is the Proton acceptor of the active site. Positions 365 and 376 each coordinate UDP-N-acetyl-alpha-D-glucosamine. Acetyl-CoA-binding positions include 385–386 (NY), alanine 422, and arginine 439.

This sequence in the N-terminal section; belongs to the N-acetylglucosamine-1-phosphate uridyltransferase family. The protein in the C-terminal section; belongs to the transferase hexapeptide repeat family. In terms of assembly, homotrimer. It depends on Mg(2+) as a cofactor.

The protein localises to the cytoplasm. It carries out the reaction alpha-D-glucosamine 1-phosphate + acetyl-CoA = N-acetyl-alpha-D-glucosamine 1-phosphate + CoA + H(+). The enzyme catalyses N-acetyl-alpha-D-glucosamine 1-phosphate + UTP + H(+) = UDP-N-acetyl-alpha-D-glucosamine + diphosphate. The protein operates within nucleotide-sugar biosynthesis; UDP-N-acetyl-alpha-D-glucosamine biosynthesis; N-acetyl-alpha-D-glucosamine 1-phosphate from alpha-D-glucosamine 6-phosphate (route II): step 2/2. It participates in nucleotide-sugar biosynthesis; UDP-N-acetyl-alpha-D-glucosamine biosynthesis; UDP-N-acetyl-alpha-D-glucosamine from N-acetyl-alpha-D-glucosamine 1-phosphate: step 1/1. Its pathway is bacterial outer membrane biogenesis; LPS lipid A biosynthesis. Functionally, catalyzes the last two sequential reactions in the de novo biosynthetic pathway for UDP-N-acetylglucosamine (UDP-GlcNAc). The C-terminal domain catalyzes the transfer of acetyl group from acetyl coenzyme A to glucosamine-1-phosphate (GlcN-1-P) to produce N-acetylglucosamine-1-phosphate (GlcNAc-1-P), which is converted into UDP-GlcNAc by the transfer of uridine 5-monophosphate (from uridine 5-triphosphate), a reaction catalyzed by the N-terminal domain. In Clostridium tetani (strain Massachusetts / E88), this protein is Bifunctional protein GlmU.